The sequence spans 426 residues: Serine--tRNA ligase (426 aa).

233-235 (TSE) contributes to the L-serine binding site. 264 to 266 (RAE) is a binding site for ATP. L-serine is bound at residue E287. 351–354 (EISS) provides a ligand contact to ATP. Position 387 (S387) interacts with L-serine.

It belongs to the class-II aminoacyl-tRNA synthetase family. Type-1 seryl-tRNA synthetase subfamily. Homodimer. The tRNA molecule binds across the dimer.

The protein localises to the cytoplasm. It carries out the reaction tRNA(Ser) + L-serine + ATP = L-seryl-tRNA(Ser) + AMP + diphosphate + H(+). The enzyme catalyses tRNA(Sec) + L-serine + ATP = L-seryl-tRNA(Sec) + AMP + diphosphate + H(+). The protein operates within aminoacyl-tRNA biosynthesis; selenocysteinyl-tRNA(Sec) biosynthesis; L-seryl-tRNA(Sec) from L-serine and tRNA(Sec): step 1/1. Catalyzes the attachment of serine to tRNA(Ser). Is also able to aminoacylate tRNA(Sec) with serine, to form the misacylated tRNA L-seryl-tRNA(Sec), which will be further converted into selenocysteinyl-tRNA(Sec). This is Serine--tRNA ligase from Stenotrophomonas maltophilia (strain K279a).